We begin with the raw amino-acid sequence, 485 residues long: Noelin (485 aa).

The N-terminal stretch at 1 to 16 (MSVPLLKIGVVLSTMA) is a signal peptide. 8 N-linked (GlcNAc...) asparagine glycosylation sites follow: Asn-33, Asn-103, Asn-187, Asn-288, Asn-307, Asn-394, Asn-431, and Asn-473. Positions 87–225 (RDARTKQLRQ…ERLRACMQKL (139 aa)) form a coiled coil. Residues 226–478 (ACGKLTGISD…QILYNVTLFH (253 aa)) enclose the Olfactomedin-like domain. Cys-227 and Cys-409 are joined by a disulfide.

In terms of assembly, homotetramer; disulfide-linked. Dimer of dimers, giving rise to a V-shaped homotretramer. Component of the AMPAR complex. In terms of processing, glycosylated.

The protein resides in the secreted. Its subcellular location is the synapse. It is found in the endoplasmic reticulum. It localises to the cell projection. The protein localises to the axon. The protein resides in the perikaryon. Functionally, contributes to the regulation of axonal growth. May play an important role in regulating the production of neural crest cells by the neural tube. The chain is Noelin (OLFM1) from Gallus gallus (Chicken).